The sequence spans 159 residues: Large ribosomal subunit protein bL17 (159 aa).

The segment covering 124–135 has biased composition (low complexity); that stretch reads EANRATRAAASK. Residues 124-159 are disordered; it reads EANRATRAAASKQAEEAKAEEAEATEAEAEETTEEK. The span at 145–159 shows a compositional bias: acidic residues; it reads AEATEAEAEETTEEK.

The protein belongs to the bacterial ribosomal protein bL17 family. Part of the 50S ribosomal subunit. Contacts protein L32.

This is Large ribosomal subunit protein bL17 from Corynebacterium aurimucosum (strain ATCC 700975 / DSM 44827 / CIP 107346 / CN-1) (Corynebacterium nigricans).